Here is a 547-residue protein sequence, read N- to C-terminus: Chaperonin GroEL (547 aa).

ATP contacts are provided by residues 29–32 (TLGP), 86–90 (DGTTT), G413, 478–480 (DVL), and D494.

The protein belongs to the chaperonin (HSP60) family. In terms of assembly, forms a cylinder of 14 subunits composed of two heptameric rings stacked back-to-back. Interacts with the co-chaperonin GroES.

It localises to the cytoplasm. The catalysed reaction is ATP + H2O + a folded polypeptide = ADP + phosphate + an unfolded polypeptide.. Its function is as follows. Together with its co-chaperonin GroES, plays an essential role in assisting protein folding. The GroEL-GroES system forms a nano-cage that allows encapsulation of the non-native substrate proteins and provides a physical environment optimized to promote and accelerate protein folding. The protein is Chaperonin GroEL of Alkaliphilus metalliredigens (strain QYMF).